A 122-amino-acid chain; its full sequence is MIQMQTELQVADNSGAKRVECIKVLGGSHRRYASVGDVIKVTVKEAAPRGKAKKGSVYNAVVVRTAKGVRRKDGSKVRFDDNAAVLLNNNGQPIGTRIFGPVTRELRTEKFMKIVSLAPEVL.

This sequence belongs to the universal ribosomal protein uL14 family. Part of the 50S ribosomal subunit. Forms a cluster with proteins L3 and L19. In the 70S ribosome, L14 and L19 interact and together make contacts with the 16S rRNA in bridges B5 and B8.

Its function is as follows. Binds to 23S rRNA. Forms part of two intersubunit bridges in the 70S ribosome. This Francisella philomiragia subsp. philomiragia (strain ATCC 25017 / CCUG 19701 / FSC 153 / O#319-036) protein is Large ribosomal subunit protein uL14.